We begin with the raw amino-acid sequence, 76 residues long: MAMKTSHVLLLCLMFVIGFVEARRSDTGPDISTPPSGSCGASIAEFNSSQILAKRAPPCRRPRLQNSEDVTHTTLP.

The N-terminal stretch at 1–22 (MAMKTSHVLLLCLMFVIGFVEA) is a signal peptide. A propeptide spans 23–35 (RRSDTGPDISTPP) (removed in mature form). The short motif at 36-38 (SGS) is the SxS motif essential for MIK2 binding element. The short motif at 36–49 (SGSCGASIAEFNSS) is the SCOOP motif element. Residues 56–76 (APPCRRPRLQNSEDVTHTTLP) are disordered. Residues 64 to 76 (LQNSEDVTHTTLP) are compositionally biased toward polar residues.

Belongs to the serine rich endogenous peptide (SCOOP) phytocytokine family. As to quaternary structure, interacts with MIK2 (via extracellular leucine-rich repeat domain); this interaction triggers the formation of complex between MIK2 and the BAK1/SERK3 and SERK4 coreceptors, and subsequent BAK1 activation by phosphorylation. As to expression, mainly expressed in young developing leaves, hydathodes, immature flowers and elongating pollen tubes.

It localises to the cell membrane. Its subcellular location is the secreted. The protein resides in the extracellular space. It is found in the apoplast. The protein localises to the endoplasmic reticulum. Its function is as follows. Brassicaceae-specific phytocytokine (plant endogenous peptide released into the apoplast) perceived by MIK2 in a BAK1/SERK3 and SERK4 coreceptors-dependent manner, that modulates various physiological and antimicrobial processes including growth prevention and reactive oxygen species (ROS) response regulation. Inhibits the fungal growth of Alternaria brassicicola, Sclerotinia sclerotiorum, Fusarium graminearum, yeast (Saccharomyces) and Botrytis cinerea, thus being an antimicrobial peptide (AMP). Promotes resistance to A.brassicicola and B.cinerea. The chain is Peptide ARACIN 1 from Arabidopsis thaliana (Mouse-ear cress).